Consider the following 165-residue polypeptide: Destrin (165 aa).

Ala-2 is modified (N-acetylalanine). Ser-3 is subject to Phosphoserine. Positions 4-153 (GVQVADEVCR…NRACIAEKLG (150 aa)) constitute an ADF-H domain. Lys-19 carries the N6-acetyllysine modification. The Nuclear localization signal signature appears at 30-34 (KKRKK).

The protein belongs to the actin-binding proteins ADF family. Post-translationally, ISGylated.

In terms of biological role, actin-depolymerizing protein. Severs actin filaments (F-actin) and binds to actin monomers (G-actin). Acts in a pH-independent manner. The sequence is that of Destrin (DSTN) from Bos taurus (Bovine).